We begin with the raw amino-acid sequence, 430 residues long: Enolase (430 aa).

Gln163 serves as a coordination point for (2R)-2-phosphoglycerate. The active-site Proton donor is the Glu205. Mg(2+) is bound by residues Asp242, Glu287, and Asp314. (2R)-2-phosphoglycerate-binding residues include Lys339, Arg368, Ser369, and Lys390. Residue Lys339 is the Proton acceptor of the active site.

This sequence belongs to the enolase family. The cofactor is Mg(2+).

The protein resides in the cytoplasm. Its subcellular location is the secreted. It is found in the cell surface. The catalysed reaction is (2R)-2-phosphoglycerate = phosphoenolpyruvate + H2O. The protein operates within carbohydrate degradation; glycolysis; pyruvate from D-glyceraldehyde 3-phosphate: step 4/5. Its function is as follows. Catalyzes the reversible conversion of 2-phosphoglycerate (2-PG) into phosphoenolpyruvate (PEP). It is essential for the degradation of carbohydrates via glycolysis. This Bacillus cytotoxicus (strain DSM 22905 / CIP 110041 / 391-98 / NVH 391-98) protein is Enolase.